An 88-amino-acid polypeptide reads, in one-letter code: Putative septation protein SpoVG (88 aa).

The protein belongs to the SpoVG family.

Functionally, could be involved in septation. The polypeptide is Putative septation protein SpoVG (Desulforudis audaxviator (strain MP104C)).